A 437-amino-acid chain; its full sequence is Probable receptor-like serine/threonine-protein kinase At4g34500 (437 aa).

The helical transmembrane segment at 25–45 (LVIAICSVFILLISLLIFLFV) threads the bilayer. Positions 145–426 (FSDDNMIGEG…MLEAEDFPFR (282 aa)) constitute a Protein kinase domain. Residues 151 to 159 (IGEGGYGVV) and Lys-173 contribute to the ATP site. The residue at position 220 (Tyr-220) is a Phosphotyrosine. Asp-273 acts as the Proton acceptor in catalysis. A Phosphoserine modification is found at Ser-277. Thr-307 and Thr-312 each carry phosphothreonine. Phosphotyrosine is present on Tyr-320.

The protein belongs to the protein kinase superfamily. Ser/Thr protein kinase family.

It is found in the cell membrane. It catalyses the reaction L-seryl-[protein] + ATP = O-phospho-L-seryl-[protein] + ADP + H(+). The catalysed reaction is L-threonyl-[protein] + ATP = O-phospho-L-threonyl-[protein] + ADP + H(+). The polypeptide is Probable receptor-like serine/threonine-protein kinase At4g34500 (Arabidopsis thaliana (Mouse-ear cress)).